Reading from the N-terminus, the 315-residue chain is Putative methyltransferase SPBC8D2.16c (315 aa).

It belongs to the class IV-like SAM-binding methyltransferase superfamily.

The protein localises to the cytoplasm. It localises to the nucleus. The sequence is that of Putative methyltransferase SPBC8D2.16c from Schizosaccharomyces pombe (strain 972 / ATCC 24843) (Fission yeast).